The primary structure comprises 300 residues: Ribosomal protein L11 methyltransferase (300 aa).

S-adenosyl-L-methionine-binding residues include T152, G173, D195, and N234.

The protein belongs to the methyltransferase superfamily. PrmA family.

Its subcellular location is the cytoplasm. The catalysed reaction is L-lysyl-[protein] + 3 S-adenosyl-L-methionine = N(6),N(6),N(6)-trimethyl-L-lysyl-[protein] + 3 S-adenosyl-L-homocysteine + 3 H(+). Its function is as follows. Methylates ribosomal protein L11. In Burkholderia thailandensis (strain ATCC 700388 / DSM 13276 / CCUG 48851 / CIP 106301 / E264), this protein is Ribosomal protein L11 methyltransferase.